A 370-amino-acid polypeptide reads, in one-letter code: Forkhead box protein J1.2 (370 aa).

A disordered region spans residues A45–T74. The fork-head DNA-binding region spans K108 to M202. The interval P227–E246 is disordered.

This sequence belongs to the FOXJ1 family.

It is found in the nucleus. Functionally, key transcription factor required for motile ciliogenesis. Activates genes essential for motile cilia formation and function. This is Forkhead box protein J1.2 from Xenopus laevis (African clawed frog).